The chain runs to 422 residues: Cytokine receptor-like factor 1 (422 aa).

The first 37 residues, 1 to 37 (MPAGRRGPAAQSARRPPPLLPLLLLLCVLGAPRAGSG), serve as a signal peptide directing secretion. Residues 38-131 (AHTAVISPQD…SILAGSCLYV (94 aa)) form the Ig-like C2-type domain. 3 N-linked (GlcNAc...) asparagine glycosylation sites follow: asparagine 92, asparagine 104, and asparagine 140. Fibronectin type-III domains are found at residues 137–232 (KPVN…ILDV) and 237–341 (PPPD…TPRS). Cysteine 143 and cysteine 153 are joined by a disulfide. Residue asparagine 168 is glycosylated (N-linked (GlcNAc...) asparagine). A disulfide bridge connects residues cysteine 184 and cysteine 195. Serine 219 is subject to Phosphoserine. N-linked (GlcNAc...) asparagine glycosylation occurs at asparagine 292. The WSXWS motif motif lies at 327-331 (WSEWS). The tract at residues 332 to 363 (HPTAASTPRSERPGPGGGACEPRGGEPSSGPV) is disordered. A glycan (N-linked (GlcNAc...) asparagine) is linked at asparagine 382. The tract at residues 399–422 (HKTRNQDEGILPSGRRGTARGPAR) is disordered.

The protein belongs to the type I cytokine receptor family. Type 3 subfamily. As to quaternary structure, forms covalent di- and tetramers. Forms a heteromeric complex with cardiotrophin-like cytokine CLCF1/CLC; the CRLF1-CLCF1 complex is a ligand for the ciliary neurotrophic factor receptor/CNTFR. The CRLF1-CLCF1 heterodimer binds SORL1 (via N-terminal ectodomain); within this complex, the interaction is mediated predominantly by the CRLF1 moiety. The tripartite signaling complex formed by CRLF1, CLCF1 and CNTFR also binds SORL1. In terms of tissue distribution, highest levels of expression observed in spleen, thymus, lymph node, appendix, bone marrow, stomach, placenta, heart, thyroid and ovary. Strongly expressed also in fetal lung.

It is found in the secreted. Functionally, in complex with CLCF1, forms a heterodimeric neurotropic cytokine that plays a crucial role during neuronal development. May also play a regulatory role in the immune system. In Homo sapiens (Human), this protein is Cytokine receptor-like factor 1 (CRLF1).